The chain runs to 156 residues: Arginine repressor (156 aa).

It belongs to the ArgR family.

The protein resides in the cytoplasm. It participates in amino-acid biosynthesis; L-arginine biosynthesis [regulation]. In terms of biological role, regulates arginine biosynthesis genes. The chain is Arginine repressor from Klebsiella pneumoniae (strain 342).